The primary structure comprises 1027 residues: Protein translocase subunit SecA (1027 aa).

Residues Gln-143, 161–165 (GEGKT), and Asp-661 each bind ATP. The interval 981–1027 (EESGTSNADNAGDNGPQTVIAEKKPGRNDLCPCGSGKKYKNCHGQQP) is disordered. Zn(2+)-binding residues include Cys-1011, Cys-1013, Cys-1022, and His-1023.

This sequence belongs to the SecA family. Monomer and homodimer. Part of the essential Sec protein translocation apparatus which comprises SecA, SecYEG and auxiliary proteins SecDF. Other proteins may also be involved. The cofactor is Zn(2+).

It is found in the cell inner membrane. The protein resides in the cytoplasm. It catalyses the reaction ATP + H2O + cellular proteinSide 1 = ADP + phosphate + cellular proteinSide 2.. In terms of biological role, part of the Sec protein translocase complex. Interacts with the SecYEG preprotein conducting channel. Has a central role in coupling the hydrolysis of ATP to the transfer of proteins into and across the cell membrane, serving as an ATP-driven molecular motor driving the stepwise translocation of polypeptide chains across the membrane. This chain is Protein translocase subunit SecA, found in Chlorobium limicola (strain DSM 245 / NBRC 103803 / 6330).